The primary structure comprises 595 residues: Elongation factor 4 (595 aa).

The region spanning 2–184 (SHIRNFSIIA…RLVATIPPPT (183 aa)) is the tr-type G domain. GTP-binding positions include 14-19 (DHGKST) and 131-134 (NKMD).

It belongs to the TRAFAC class translation factor GTPase superfamily. Classic translation factor GTPase family. LepA subfamily.

Its subcellular location is the cell inner membrane. The catalysed reaction is GTP + H2O = GDP + phosphate + H(+). Functionally, required for accurate and efficient protein synthesis under certain stress conditions. May act as a fidelity factor of the translation reaction, by catalyzing a one-codon backward translocation of tRNAs on improperly translocated ribosomes. Back-translocation proceeds from a post-translocation (POST) complex to a pre-translocation (PRE) complex, thus giving elongation factor G a second chance to translocate the tRNAs correctly. Binds to ribosomes in a GTP-dependent manner. The sequence is that of Elongation factor 4 from Pseudomonas syringae pv. tomato (strain ATCC BAA-871 / DC3000).